The following is a 195-amino-acid chain: Small ribosomal subunit protein bS16 (195 aa).

Positions 171–181 are enriched in low complexity; sequence PEAPVAAAEPA. The interval 171 to 195 is disordered; that stretch reads PEAPVAAAEPAPEVKAEEKEEGGEA.

It belongs to the bacterial ribosomal protein bS16 family.

The protein is Small ribosomal subunit protein bS16 of Chlorobium luteolum (strain DSM 273 / BCRC 81028 / 2530) (Pelodictyon luteolum).